The primary structure comprises 137 residues: Large-conductance mechanosensitive channel (137 aa).

A run of 4 helical transmembrane segments spans residues 9–29, 32–52, 54–74, and 79–99; these read AFAV…GAAF, IVSS…IGGV, FGDL…VVLA, and IQSI…VKVI.

It belongs to the MscL family. Homopentamer.

The protein resides in the cell inner membrane. Its function is as follows. Channel that opens in response to stretch forces in the membrane lipid bilayer. May participate in the regulation of osmotic pressure changes within the cell. This is Large-conductance mechanosensitive channel from Pseudomonas fluorescens (strain ATCC BAA-477 / NRRL B-23932 / Pf-5).